The primary structure comprises 507 residues: Beta-glucosidase 12 (507 aa).

A signal peptide spans 1–22 (MRTIYLSLLVFIIVLALNEVMA). Position 50 (Q50) interacts with a beta-D-glucoside. N81 carries N-linked (GlcNAc...) asparagine glycosylation. Residues H154 and 199-200 (NE) each bind a beta-D-glucoside. The Proton donor role is filled by E200. The cysteines at positions 219 and 227 are disulfide-linked. Residue N226 is glycosylated (N-linked (GlcNAc...) asparagine). An a beta-D-glucoside-binding site is contributed by Y344. Residue N358 is glycosylated (N-linked (GlcNAc...) asparagine). Residues E414, W459, 466-467 (EW), and F475 contribute to the a beta-D-glucoside site. Catalysis depends on E414, which acts as the Nucleophile.

Belongs to the glycosyl hydrolase 1 family.

The enzyme catalyses Hydrolysis of terminal, non-reducing beta-D-glucosyl residues with release of beta-D-glucose.. This chain is Beta-glucosidase 12, found in Arabidopsis thaliana (Mouse-ear cress).